Reading from the N-terminus, the 364-residue chain is Chaperone protein DnaJ (364 aa).

Residues 4-69 form the J domain; sequence DYYEILGLSK…NKKAKYDRFG (66 aa). The CR-type zinc finger occupies 135–213; sequence GYKNNINITR…CKGKGRITNQ (79 aa). Zn(2+) is bound by residues Cys148, Cys151, Cys165, Cys168, Cys187, Cys190, Cys201, and Cys204. CXXCXGXG motif repeat units lie at residues 148–155, 165–172, 187–194, and 201–208; these read CHSCLGKK, CNMCNGSG, CSKCYGEG, and CKSCKGKG.

It belongs to the DnaJ family. As to quaternary structure, homodimer. Requires Zn(2+) as cofactor.

Its subcellular location is the cytoplasm. In terms of biological role, participates actively in the response to hyperosmotic and heat shock by preventing the aggregation of stress-denatured proteins and by disaggregating proteins, also in an autonomous, DnaK-independent fashion. Unfolded proteins bind initially to DnaJ; upon interaction with the DnaJ-bound protein, DnaK hydrolyzes its bound ATP, resulting in the formation of a stable complex. GrpE releases ADP from DnaK; ATP binding to DnaK triggers the release of the substrate protein, thus completing the reaction cycle. Several rounds of ATP-dependent interactions between DnaJ, DnaK and GrpE are required for fully efficient folding. Also involved, together with DnaK and GrpE, in the DNA replication of plasmids through activation of initiation proteins. This Borrelia garinii subsp. bavariensis (strain ATCC BAA-2496 / DSM 23469 / PBi) (Borreliella bavariensis) protein is Chaperone protein DnaJ.